The chain runs to 96 residues: Accessory cholera enterotoxin (96 aa).

Residues 76-96 (QALAIVLQALMTRFALRALNL) form a helical membrane-spanning segment.

Its subcellular location is the secreted. The protein resides in the host cell membrane. Its function is as follows. Increases short-circuit current in rabbit ileal tissue mounted in Ussing chambers, by increasing the potential difference. Cultures of V.cholerae containing the cloned ace gene cause fluid secretion in ligated rabbit ileal loops. This Vibrio cholerae serotype O1 (strain ATCC 39315 / El Tor Inaba N16961) protein is Accessory cholera enterotoxin (ace).